Reading from the N-terminus, the 457-residue chain is RNA-binding suppressor of PAS kinase protein 1 (457 aa).

Residues 26–88 enclose the R3H domain; the sequence is RIFIIELENS…SCVILFKGEN (63 aa). 3 disordered regions span residues 142–181, 195–291, and 406–457; these read IDGN…IEKE, LNKS…NGGY, and FQGK…KLNI. Polar residues predominate over residues 145-158; the sequence is NTRTPNSNLTANSN. Positions 159–181 are enriched in basic and acidic residues; that stretch reads KDQKIEIDDKSSTDLEQERIEKE. Ser-198 is subject to Phosphoserine. Low complexity predominate over residues 226–247; that stretch reads SNTQTSNGSVSSSSPFNSSVTT. The segment covering 248 to 258 has biased composition (polar residues); it reads IQVNKPQQQFY. Over residues 418-435 the composition is skewed to basic and acidic residues; the sequence is KRSDDSNSNKNEGIRRAS. 3 positions are modified to phosphoserine: Ser-435, Ser-439, and Ser-447. The span at 443–457 shows a compositional bias: basic and acidic residues; that stretch reads RDTDSVEMKFDKLNI.

Its subcellular location is the cytoplasm. The chain is RNA-binding suppressor of PAS kinase protein 1 (RBS1) from Saccharomyces cerevisiae (strain ATCC 204508 / S288c) (Baker's yeast).